The sequence spans 1026 residues: Multidrug resistance protein MdtC (1026 aa).

The Cytoplasmic portion of the chain corresponds to 1-6 (MRFFAL). The chain crosses the membrane as a helical span at residues 7-29 (FIYRPVATILIAAAITLCGILGF). Residues 30–335 (RLLPVAPLPQ…TIRASLQEVE (306 aa)) lie on the Periplasmic side of the membrane. A helical transmembrane segment spans residues 336 to 353 (ETLAISVALVILVVFLFL). Topologically, residues 354–359 (RSGRAT) are cytoplasmic. Residues 360 to 379 (LIPAVAVPVSLIGTFAAMYL) form a helical membrane-spanning segment. At 380-388 (CGFSLNNLS) the chain is on the periplasmic side. The helical transmembrane segment at 389-411 (LMALTIATGFVVDDAIVVLENIA) threads the bilayer. Residues 412-430 (RHLEARMKPLQAALQGTRE) are Cytoplasmic-facing. A helical membrane pass occupies residues 431–453 (VGFTVISMSLSLVAVFLPLLLMG). Over 454–467 (GLPGRLLREFAVTL) the chain is Periplasmic. A helical membrane pass occupies residues 468-490 (SVAIGISLVVSLTLTPMMCGWML). The Cytoplasmic portion of the chain corresponds to 491–852 (KSSKPRTQPR…QVFQQTMNSQ (362 aa)). The chain crosses the membrane as a helical span at residues 853 to 875 (LILIVAAIATVYIVLGILYESYV). The Periplasmic portion of the chain corresponds to 876–894 (HPLTILSTLPSAGVGALLA). A helical transmembrane segment spans residues 895 to 917 (LELFNAPFSLIALIGIMLLIGIV). The Cytoplasmic portion of the chain corresponds to 918–947 (KKNAIMMVDFALEAQRSGGLTPEQAIFQAC). A helical transmembrane segment spans residues 948–970 (LLRFRPIMMTTLAALFGALPLVL). Over 971-984 (SGGDGSELRQPLGI) the chain is Periplasmic. The chain crosses the membrane as a helical span at residues 985-1007 (TIVGGLVMSQLLTLYTTPVVYLF). The Cytoplasmic segment spans residues 1008–1026 (FDRLRLRFSRKNSKPVVEI).

Belongs to the resistance-nodulation-cell division (RND) (TC 2.A.6) family. MdtC subfamily. In terms of assembly, part of a tripartite efflux system composed of MdtA, MdtB and MdtC. MdtC forms a heteromultimer with MdtB.

Its subcellular location is the cell inner membrane. The polypeptide is Multidrug resistance protein MdtC (Salmonella typhi).